Reading from the N-terminus, the 98-residue chain is Integration host factor subunit alpha (98 aa).

The protein belongs to the bacterial histone-like protein family. Heterodimer of an alpha and a beta chain.

Functionally, this protein is one of the two subunits of integration host factor, a specific DNA-binding protein that functions in genetic recombination as well as in transcriptional and translational control. The polypeptide is Integration host factor subunit alpha (Mannheimia succiniciproducens (strain KCTC 0769BP / MBEL55E)).